Reading from the N-terminus, the 283-residue chain is Thymidylate synthase (283 aa).

R22 serves as a coordination point for dUMP. C160 (nucleophile) is an active-site residue. Residues R180 to D183, N191, and H221 to Y223 contribute to the dUMP site. D183 serves as a coordination point for (6R)-5,10-methylene-5,6,7,8-tetrahydrofolate. A282 is a binding site for (6R)-5,10-methylene-5,6,7,8-tetrahydrofolate.

It belongs to the thymidylate synthase family. Bacterial-type ThyA subfamily. As to quaternary structure, homodimer.

The protein localises to the cytoplasm. The enzyme catalyses dUMP + (6R)-5,10-methylene-5,6,7,8-tetrahydrofolate = 7,8-dihydrofolate + dTMP. It functions in the pathway pyrimidine metabolism; dTTP biosynthesis. Functionally, catalyzes the reductive methylation of 2'-deoxyuridine-5'-monophosphate (dUMP) to 2'-deoxythymidine-5'-monophosphate (dTMP) while utilizing 5,10-methylenetetrahydrofolate (mTHF) as the methyl donor and reductant in the reaction, yielding dihydrofolate (DHF) as a by-product. This enzymatic reaction provides an intracellular de novo source of dTMP, an essential precursor for DNA biosynthesis. The chain is Thymidylate synthase from Shewanella frigidimarina (strain NCIMB 400).